Here is a 578-residue protein sequence, read N- to C-terminus: E3 ubiquitin-protein ligase hrd-like protein 1 (578 aa).

Residues 32–52 (GYLALSLCVAFIASASVFTHF) form a helical membrane-spanning segment. Asn-68 carries an N-linked (GlcNAc...) asparagine glycan. 7 consecutive transmembrane segments (helical) span residues 76–96 (FGINIDTIAGSTVFQMAHYIL), 101–121 (LIWVAINSYFAILAMCTKLII), 134–154 (VAARQAFLSYILLTIVYLSVV), 163–183 (VMPWMIWGGVCGFLSHLQFVT), 202–222 (SFISLFLFFVSIAMTFMVSRF), 230–250 (PAVLLYFDCLLAVFRSTYILF), and 286–306 (FLSYAQLFVFAPGLNLTSIFF). Residues 350–388 (CIVCWELLGTSRRLPCSHQFHDWCLMWWLAQDSSCPTCR) form an RING-type; atypical zinc finger. A CUE domain is found at 447–489 (QLQSMLETVLEMFPQMSPETILADLRQSGSAQSTIENILEGRM). Asn-492 is a glycosylation site (N-linked (GlcNAc...) asparagine).

It localises to the membrane. Functionally, proposed to have a role in neuroprotection. This Caenorhabditis briggsae protein is E3 ubiquitin-protein ligase hrd-like protein 1.